The chain runs to 425 residues: UPF0597 protein VFMJ11_0655 (425 aa).

It belongs to the UPF0597 family.

This is UPF0597 protein VFMJ11_0655 from Aliivibrio fischeri (strain MJ11) (Vibrio fischeri).